Consider the following 181-residue polypeptide: Caltractin ICL1d (181 aa).

The interval 1-29 (MARRGQQPPPQQAPPAQKNQTGKFNPAEF) is disordered. EF-hand domains are found at residues 37 to 72 (EEVL…LGFE), 73 to 108 (AKNQ…RISE), 110 to 145 (DSKA…LGET), and 146 to 181 (MDDS…KTFA). Residues aspartate 50, aspartate 52, threonine 54, serine 56, glutamate 61, aspartate 86, aspartate 88, serine 90, glutamine 92, and glutamate 97 each coordinate Ca(2+).

The protein belongs to the centrin family. In terms of assembly, monomer.

The protein resides in the cytoplasm. Its subcellular location is the cytoskeleton. Its function is as follows. Plays a fundamental role in microtubule organizing center structure and function. Component of the infraciliary lattice (ICL) and the ciliary basal bodies. The sequence is that of Caltractin ICL1d (Icl1d) from Paramecium tetraurelia.